The sequence spans 89 residues: MAKKSWIAREEKRERLYEKHKEERRRLKEEEKWVELQKLPRDSSPVRQNNRCELCGRQRGYLRKFGVCRICFRELALEGKIPGIRKASW.

4 residues coordinate Zn(2+): Cys-52, Cys-55, Cys-68, and Cys-71.

The protein belongs to the universal ribosomal protein uS14 family. In terms of assembly, part of the 30S ribosomal subunit. Contacts proteins S3 and S10. Zn(2+) is required as a cofactor.

In terms of biological role, binds 16S rRNA, required for the assembly of 30S particles and may also be responsible for determining the conformation of the 16S rRNA at the A site. The polypeptide is Small ribosomal subunit protein uS14 (rpsN) (Salinibacter ruber (strain DSM 13855 / M31)).